Reading from the N-terminus, the 304-residue chain is Probable porphobilinogen deaminase (304 aa).

Cysteine 240 carries the post-translational modification S-(dipyrrolylmethanemethyl)cysteine.

The protein belongs to the HMBS family. Dipyrromethane serves as cofactor.

It carries out the reaction 4 porphobilinogen + H2O = hydroxymethylbilane + 4 NH4(+). The protein operates within porphyrin-containing compound metabolism; protoporphyrin-IX biosynthesis; coproporphyrinogen-III from 5-aminolevulinate: step 2/4. Tetrapolymerization of the monopyrrole PBG into the hydroxymethylbilane pre-uroporphyrinogen in several discrete steps. This Ignicoccus hospitalis (strain KIN4/I / DSM 18386 / JCM 14125) protein is Probable porphobilinogen deaminase.